The chain runs to 462 residues: Bifunctional enzyme LpxC/FabZ (462 aa).

A UDP-3-O-acyl-N-acetylglucosamine deacetylase region spans residues 1–302 (MQKQQTLKDK…MARLIRKEIK (302 aa)). Zn(2+) is bound by residues H78, H260, and D264. H287 functions as the Proton donor in the catalytic mechanism. The tract at residues 303-462 (QNEAQAPVYN…FMAQIIQNKE (160 aa)) is 3-hydroxyacyl-[acyl-carrier-protein] dehydratase. Residue H364 is part of the active site.

It in the N-terminal section; belongs to the LpxC family. This sequence in the C-terminal section; belongs to the thioester dehydratase family. Zn(2+) serves as cofactor.

Its subcellular location is the cytoplasm. The enzyme catalyses a UDP-3-O-[(3R)-3-hydroxyacyl]-N-acetyl-alpha-D-glucosamine + H2O = a UDP-3-O-[(3R)-3-hydroxyacyl]-alpha-D-glucosamine + acetate. It carries out the reaction a (3R)-hydroxyacyl-[ACP] = a (2E)-enoyl-[ACP] + H2O. It functions in the pathway glycolipid biosynthesis; lipid IV(A) biosynthesis; lipid IV(A) from (3R)-3-hydroxytetradecanoyl-[acyl-carrier-protein] and UDP-N-acetyl-alpha-D-glucosamine: step 2/6. Functionally, catalyzes the hydrolysis of UDP-3-O-myristoyl-N-acetylglucosamine to form UDP-3-O-myristoylglucosamine and acetate, the committed step in lipid A biosynthesis. In terms of biological role, involved in unsaturated fatty acids biosynthesis. Catalyzes the dehydration of short chain beta-hydroxyacyl-ACPs and long chain saturated and unsaturated beta-hydroxyacyl-ACPs. This is Bifunctional enzyme LpxC/FabZ (lpxC/fabZ) from Porphyromonas gingivalis (strain ATCC BAA-308 / W83).